We begin with the raw amino-acid sequence, 250 residues long: Ubiquitin-conjugating enzyme E2 6 (250 aa).

The Cytoplasmic segment spans residues 1 to 232 (MATKQAHKRL…DGKEPNDSSS (232 aa)). The region spanning 5 to 167 (QAHKRLTKEY…VQENVETLEK (163 aa)) is the UBC core domain. C87 (glycyl thioester intermediate) is an active-site residue. The residue at position 139 (S139) is a Phosphoserine. A Phosphothreonine modification is found at T178. The tract at residues 209-229 (AEQALRQSENNSKKDGKEPND) is disordered. The span at 219 to 228 (NSKKDGKEPN) shows a compositional bias: basic and acidic residues. The helical transmembrane segment at 233 to 249 (MVYIGIAIFLFLVGLFM) threads the bilayer.

This sequence belongs to the ubiquitin-conjugating enzyme family.

The protein localises to the endoplasmic reticulum membrane. It carries out the reaction S-ubiquitinyl-[E1 ubiquitin-activating enzyme]-L-cysteine + [E2 ubiquitin-conjugating enzyme]-L-cysteine = [E1 ubiquitin-activating enzyme]-L-cysteine + S-ubiquitinyl-[E2 ubiquitin-conjugating enzyme]-L-cysteine.. It functions in the pathway protein modification; protein ubiquitination. In terms of biological role, catalyzes the covalent attachment of ubiquitin to other proteins. Functions in degradation of misfolded or regulated proteins localized in the endoplasmic reticulum (ER) lumen or membrane via the ubiquitin-proteasome system. Cognate E2 conjugating enzyme for the DOA10 ubiquitin ligase complex, which is part of the ERAD-C pathway responsible for the rapid degradation of membrane proteins with misfolded cytoplasmic domains. The sequence is that of Ubiquitin-conjugating enzyme E2 6 (UBC6) from Saccharomyces cerevisiae (strain ATCC 204508 / S288c) (Baker's yeast).